The sequence spans 297 residues: Protoheme IX farnesyltransferase (297 aa).

The next 9 helical transmembrane spans lie at 26 to 46 (VTQL…PGMV), 48 to 68 (YPVL…AFAV), 96 to 116 (LHII…LWNF), 120 to 140 (LTMW…TWLL), 147 to 167 (NIVI…AAVT), 174 to 194 (AWHL…ALAL), 218 to 238 (LLNI…PYIY), 245 to 265 (YLIS…ALFI), and 276 to 296 (FRFS…DHYF).

Belongs to the UbiA prenyltransferase family. Protoheme IX farnesyltransferase subfamily.

The protein localises to the cell inner membrane. The enzyme catalyses heme b + (2E,6E)-farnesyl diphosphate + H2O = Fe(II)-heme o + diphosphate. The protein operates within porphyrin-containing compound metabolism; heme O biosynthesis; heme O from protoheme: step 1/1. Functionally, converts heme B (protoheme IX) to heme O by substitution of the vinyl group on carbon 2 of heme B porphyrin ring with a hydroxyethyl farnesyl side group. This chain is Protoheme IX farnesyltransferase, found in Polynucleobacter necessarius subsp. necessarius (strain STIR1).